Reading from the N-terminus, the 1131-residue chain is DNA-directed RNA polymerase subunit beta (1131 aa).

The segment at 1108 to 1131 is disordered; the sequence is QLARRTPPRPTYESLSRESLDDDE. Over residues 1122–1131 the composition is skewed to basic and acidic residues; the sequence is LSRESLDDDE.

It belongs to the RNA polymerase beta chain family. In terms of assembly, in cyanobacteria the RNAP catalytic core is composed of 2 alpha, 1 beta, 1 beta', 1 gamma and 1 omega subunit. When a sigma factor is associated with the core the holoenzyme is formed, which can initiate transcription.

It catalyses the reaction RNA(n) + a ribonucleoside 5'-triphosphate = RNA(n+1) + diphosphate. Functionally, DNA-dependent RNA polymerase catalyzes the transcription of DNA into RNA using the four ribonucleoside triphosphates as substrates. The protein is DNA-directed RNA polymerase subunit beta of Nostoc sp. (strain PCC 7120 / SAG 25.82 / UTEX 2576).